A 54-amino-acid chain; its full sequence is Large ribosomal subunit protein bL33C (54 aa).

Belongs to the bacterial ribosomal protein bL33 family.

This is Large ribosomal subunit protein bL33C from Streptomyces griseus subsp. griseus (strain JCM 4626 / CBS 651.72 / NBRC 13350 / KCC S-0626 / ISP 5235).